The sequence spans 93 residues: Sec-independent protein translocase protein TatA (93 aa).

Residues 1–21 form a helical membrane-spanning segment; that stretch reads MGAMSPWHWAIVALVVVILFG. Residues 44–93 form a disordered region; it reads KEMQNDNSTPAPTAQQSAPAELPVADTTTAPVTPPAPVQPQPQHTEPKSA. Low complexity predominate over residues 51-74; it reads STPAPTAQQSAPAELPVADTTTAP.

Belongs to the TatA/E family. In terms of assembly, the Tat system comprises two distinct complexes: a TatABC complex, containing multiple copies of TatA, TatB and TatC subunits, and a separate TatA complex, containing only TatA subunits. Substrates initially bind to the TatABC complex, which probably triggers association of the separate TatA complex to form the active translocon.

It is found in the cell membrane. Functionally, part of the twin-arginine translocation (Tat) system that transports large folded proteins containing a characteristic twin-arginine motif in their signal peptide across membranes. TatA could form the protein-conducting channel of the Tat system. The chain is Sec-independent protein translocase protein TatA from Rhodococcus opacus (strain B4).